The primary structure comprises 1253 residues: Cytoplasmic FMR1-interacting protein 2 (1253 aa).

Belongs to the CYFIP family.

It is found in the cytoplasm. Involved in T-cell adhesion and p53-dependent induction of apoptosis. Does not bind RNA. This is Cytoplasmic FMR1-interacting protein 2 (cyfip2) from Xenopus laevis (African clawed frog).